A 112-amino-acid chain; its full sequence is C-type natriuretic peptide 3 (112 aa).

Residues 1–19 (MSLRAFMLCVCLLLQSVGA) form the signal peptide. A propeptide spanning residues 20–90 (RPASELQNLE…SKRSWGRYKK (71 aa)) is cleaved from the precursor. The interval 33 to 67 (QDQLSSTEHPEEDRLDRTREEPQLGGSSSREAADE) is disordered. Residues 40–54 (EHPEEDRLDRTREEP) are compositionally biased toward basic and acidic residues. Cysteines 96 and 112 form a disulfide.

This sequence belongs to the natriuretic peptide family. In terms of tissue distribution, spinal cord, kidney, ovary, heart and spleen, and to a lower extent in brain and liver.

The protein localises to the secreted. In terms of biological role, exhibits natriuretic and vasodepressant activity. Has cGMP-stimulating activity. May help to regulate body fluid homeostasis in a variety of aquatic environments. The sequence is that of C-type natriuretic peptide 3 from Oryzias latipes (Japanese rice fish).